A 137-amino-acid polypeptide reads, in one-letter code: Large ribosomal subunit protein uL16 (137 aa).

Belongs to the universal ribosomal protein uL16 family. In terms of assembly, part of the 50S ribosomal subunit.

Its function is as follows. Binds 23S rRNA and is also seen to make contacts with the A and possibly P site tRNAs. The polypeptide is Large ribosomal subunit protein uL16 (Bartonella bacilliformis (strain ATCC 35685 / KC583 / Herrer 020/F12,63)).